Here is an 87-residue protein sequence, read N- to C-terminus: Glutaredoxin 1 (87 aa).

Positions 1–87 (MFTVIFGRPG…WAKENLNLFA (87 aa)) constitute a Glutaredoxin domain. A disulfide bridge links cysteine 11 with cysteine 14.

This sequence belongs to the glutaredoxin family. In terms of assembly, monomer.

The disulfide bond functions as an electron carrier in the glutathione-dependent synthesis of deoxyribonucleotides by the enzyme ribonucleotide reductase. In addition, it is also involved in reducing some disulfides in a coupled system with glutathione reductase. The protein is Glutaredoxin 1 (grxA) of Salmonella typhi.